A 157-amino-acid chain; its full sequence is Protein Smg (157 aa).

It belongs to the Smg family.

This Escherichia coli O8 (strain IAI1) protein is Protein Smg.